The chain runs to 373 residues: UDP-N-acetylglucosamine--N-acetylmuramyl-(pentapeptide) pyrophosphoryl-undecaprenol N-acetylglucosamine transferase (373 aa).

Residues 16–18 (TGG), Asn128, Arg164, Ser192, Ile250, and Gln295 each bind UDP-N-acetyl-alpha-D-glucosamine.

The protein belongs to the glycosyltransferase 28 family. MurG subfamily.

It localises to the cell inner membrane. The enzyme catalyses di-trans,octa-cis-undecaprenyl diphospho-N-acetyl-alpha-D-muramoyl-L-alanyl-D-glutamyl-meso-2,6-diaminopimeloyl-D-alanyl-D-alanine + UDP-N-acetyl-alpha-D-glucosamine = di-trans,octa-cis-undecaprenyl diphospho-[N-acetyl-alpha-D-glucosaminyl-(1-&gt;4)]-N-acetyl-alpha-D-muramoyl-L-alanyl-D-glutamyl-meso-2,6-diaminopimeloyl-D-alanyl-D-alanine + UDP + H(+). The protein operates within cell wall biogenesis; peptidoglycan biosynthesis. Cell wall formation. Catalyzes the transfer of a GlcNAc subunit on undecaprenyl-pyrophosphoryl-MurNAc-pentapeptide (lipid intermediate I) to form undecaprenyl-pyrophosphoryl-MurNAc-(pentapeptide)GlcNAc (lipid intermediate II). This chain is UDP-N-acetylglucosamine--N-acetylmuramyl-(pentapeptide) pyrophosphoryl-undecaprenol N-acetylglucosamine transferase, found in Paraburkholderia phymatum (strain DSM 17167 / CIP 108236 / LMG 21445 / STM815) (Burkholderia phymatum).